Here is a 514-residue protein sequence, read N- to C-terminus: 5'-AMP-activated protein kinase subunit gamma-3 (514 aa).

Disordered stretches follow at residues 1-121 (MELA…FPKA) and 134-155 (DNPPTERDILPSDCAASASDSN). Positions 59–71 (SRSWPSRAVTTSS) are enriched in polar residues. CBS domains lie at 222–283 (MATS…RSPL), 305–363 (CFKP…GTLL), and 380–440 (TFRD…HLDM). ADP is bound by residues arginine 250, 265-270 (MLTITD), valine 310, 331-332 (HR), and lysine 350. Residues arginine 250, 265–270 (MLTITD), valine 310, histidine 331, 331–332 (HR), lysine 350, threonine 380, alanine 385, 406–407 (SA), 422–425 (SRFD), arginine 449, leucine 457, histidine 478, 478–479 (HR), and 494–497 (SLSD) each bind AMP. ATP-binding positions include arginine 250, 265-270 (MLTITD), valine 310, 331-332 (HR), arginine 332, and lysine 350. The short motif at 318-339 (LFEAVYALIKNRIHRLPVLDPV) is the AMPK pseudosubstrate element. Residues 422–425 (SRFD), arginine 449, leucine 457, and 478–479 (HR) each bind ADP. Residues 422 to 425 (SRFD), arginine 449, leucine 457, and 478 to 479 (HR) contribute to the ATP site. The region spanning 452-511 (CLEGVLSCQPHETLGEVIDRIVREQVHRLVLVDETQHLLGVVSLSDILQALVLSPAGIDA) is the CBS 4 domain.

The protein belongs to the 5'-AMP-activated protein kinase gamma subunit family. As to quaternary structure, AMPK is a heterotrimer of an alpha catalytic subunit (PRKAA1 or PRKAA2), a beta (PRKAB1 or PRKAB2) and a gamma non-catalytic subunits (PRKAG1, PRKAG2 or PRKAG3). Interacts with FNIP1 and FNIP2. In terms of processing, phosphorylated by ULK1; leading to negatively regulate AMPK activity and suggesting the existence of a regulatory feedback loop between ULK1 and AMPK. Glycosylated; O-GlcNAcylated by OGT, promoting the AMP-activated protein kinase (AMPK) activity. As to expression, muscle.

AMP/ATP-binding subunit of AMP-activated protein kinase (AMPK), an energy sensor protein kinase that plays a key role in regulating cellular energy metabolism. In response to reduction of intracellular ATP levels, AMPK activates energy-producing pathways and inhibits energy-consuming processes: inhibits protein, carbohydrate and lipid biosynthesis, as well as cell growth and proliferation. AMPK acts via direct phosphorylation of metabolic enzymes, and by longer-term effects via phosphorylation of transcription regulators. AMPK also acts as a regulator of cellular polarity by remodeling the actin cytoskeleton; probably by indirectly activating myosin. The AMPK gamma3 subunit is a non-catalytic subunit with a regulatory role in muscle energy metabolism. It mediates binding to AMP, ADP and ATP, leading to AMPK activation or inhibition: AMP-binding results in allosteric activation of alpha catalytic subunit (PRKAA1 or PRKAA2) both by inducing phosphorylation and preventing dephosphorylation of catalytic subunits. ADP also stimulates phosphorylation, without stimulating already phosphorylated catalytic subunit. ATP promotes dephosphorylation of catalytic subunit, rendering the AMPK enzyme inactive. This Sus scrofa (Pig) protein is 5'-AMP-activated protein kinase subunit gamma-3 (PRKAG3).